Consider the following 143-residue polypeptide: Ribonuclease H (143 aa).

Positions 1 to 136 constitute an RNase H type-1 domain; the sequence is MQEIEIFCDG…CDSLAKLEAQ (136 aa). Mg(2+)-binding residues include Asp9, Glu47, Asp69, and Asp128.

This sequence belongs to the RNase H family. In terms of assembly, monomer. Mg(2+) serves as cofactor.

It localises to the cytoplasm. It carries out the reaction Endonucleolytic cleavage to 5'-phosphomonoester.. In terms of biological role, endonuclease that specifically degrades the RNA of RNA-DNA hybrids. The chain is Ribonuclease H from Helicobacter acinonychis (strain Sheeba).